A 389-amino-acid chain; its full sequence is Nucleic acid dioxygenase ALKBH1 (389 aa).

Residues 86-389 form a tRNA-binding region; it reads SKWQAYGLKG…VKRARINPDS (304 aa). Residues tryptophan 144 and 175–177 contribute to the substrate site; that span reads YHY. A Fe2OG dioxygenase domain is found at 208 to 347; that stretch reads GFEDFRAEAG…RVNMTVRQVL (140 aa). 220 to 222 is a binding site for 2-oxoglutarate; sequence NYY. The Fe cation site is built by histidine 231, aspartate 233, and histidine 287. Residue aspartate 233 coordinates substrate. 338–344 contacts 2-oxoglutarate; the sequence is RVNMTVR.

Belongs to the alkB family. As to quaternary structure, monomer. Interacts with DNAJB6. The cofactor is Fe(2+). As to expression, ubiquitous.

The protein localises to the nucleus. It is found in the mitochondrion. The catalysed reaction is 2'-deoxyribonucleotide-(2'-deoxyribose 5'-phosphate)-2'-deoxyribonucleotide-DNA = a 3'-end 2'-deoxyribonucleotide-(2,3-dehydro-2,3-deoxyribose 5'-phosphate)-DNA + a 5'-end 5'-phospho-2'-deoxyribonucleoside-DNA + H(+). It carries out the reaction a methylated nucleobase within DNA + 2-oxoglutarate + O2 = a nucleobase within DNA + formaldehyde + succinate + CO2. The enzyme catalyses an N(6)-methyl-2'-deoxyadenosine in DNA + 2-oxoglutarate + O2 = a 2'-deoxyadenosine in DNA + formaldehyde + succinate + CO2. It catalyses the reaction an N(1)-methyladenosine in tRNA + 2-oxoglutarate + O2 = an adenosine in tRNA + formaldehyde + succinate + CO2. The catalysed reaction is 5-methylcytidine(34) in mitochondrial tRNA(Met) + 2 2-oxoglutarate + 2 O2 = 5-formylcytidine(34) in mitochondrial tRNA(Met) + 2 succinate + 2 CO2 + H2O. It carries out the reaction an N(3)-methylcytidine in mRNA + 2-oxoglutarate + O2 = a cytidine in mRNA + formaldehyde + succinate + CO2. The enzyme catalyses N(1)-methyladenosine(58) in tRNA + 2-oxoglutarate + O2 = adenosine(58) in tRNA + formaldehyde + succinate + CO2. Functionally, dioxygenase that acts on nucleic acids, such as DNA and tRNA. Requires molecular oxygen, alpha-ketoglutarate and iron. A number of activities have been described for this dioxygenase, but recent results suggest that it mainly acts on tRNAs and mediates their demethylation or oxidation depending on the context and subcellular compartment. Mainly acts as a tRNA demethylase by removing N(1)-methyladenine from various tRNAs, with a preference for N(1)-methyladenine at position 58 (m1A58) present on a stem loop structure of tRNAs. Acts as a regulator of translation initiation and elongation in response to glucose deprivation: regulates both translation initiation, by mediating demethylation of tRNA(Met), and translation elongation, N(1)-methyladenine-containing tRNAs being preferentially recruited to polysomes to promote translation elongation. In mitochondrion, specifically interacts with mt-tRNA(Met) and mediates oxidation of mt-tRNA(Met) methylated at cytosine(34) to form 5-formylcytosine (f(5)c) at this position. mt-tRNA(Met) containing the f(5)c modification at the wobble position enables recognition of the AUA codon in addition to the AUG codon, expanding codon recognition in mitochondrial translation. Specifically demethylates DNA methylated on the 6th position of adenine (N(6)-methyladenosine) DNA. N(6)-methyladenosine (m6A) DNA is present at some L1 elements in embryonic stem cells and probably promotes their silencing. Demethylates mRNAs containing N(3)-methylcytidine modification. Also able to repair alkylated single-stranded DNA by oxidative demethylation, but with low activity. Also has DNA lyase activity and introduces double-stranded breaks at abasic sites: cleaves both single-stranded DNA and double-stranded DNA at abasic sites, with the greatest activity towards double-stranded DNA with two abasic sites. DNA lyase activity does not require alpha-ketoglutarate and iron and leads to the formation of an irreversible covalent protein-DNA adduct with the 5' DNA product. DNA lyase activity is not required during base excision repair and class switch recombination of the immunoglobulin heavy chain during B lymphocyte activation. May play a role in placental trophoblast lineage differentiation. The chain is Nucleic acid dioxygenase ALKBH1 from Homo sapiens (Human).